The sequence spans 182 residues: Probable pyruvoyl-dependent arginine decarboxylase (182 aa).

The residue at position 43 (serine 43) is a Pyruvic acid (Ser).

This sequence belongs to the PdaD family. It depends on pyruvate as a cofactor.

The catalysed reaction is L-arginine + H(+) = agmatine + CO2. The protein is Probable pyruvoyl-dependent arginine decarboxylase of Chloroherpeton thalassium (strain ATCC 35110 / GB-78).